The chain runs to 852 residues: DNA mismatch repair protein MutS (852 aa).

ATP is bound at residue 615-622; that stretch reads GPNMAGKS.

It belongs to the DNA mismatch repair MutS family.

This protein is involved in the repair of mismatches in DNA. It is possible that it carries out the mismatch recognition step. This protein has a weak ATPase activity. The polypeptide is DNA mismatch repair protein MutS (Thermodesulfovibrio yellowstonii (strain ATCC 51303 / DSM 11347 / YP87)).